The following is a 57-amino-acid chain: Large ribosomal subunit protein bL33 (57 aa).

It belongs to the bacterial ribosomal protein bL33 family.

In Shewanella pealeana (strain ATCC 700345 / ANG-SQ1), this protein is Large ribosomal subunit protein bL33.